Consider the following 147-residue polypeptide: Small ribosomal subunit protein uS5 (147 aa).

The region spanning 9–72 is the S5 DRBM domain; sequence FQEVVVNIGR…DDAFKNLIHV (64 aa).

It belongs to the universal ribosomal protein uS5 family. Part of the 30S ribosomal subunit. Contacts proteins S4 and S8.

In terms of biological role, with S4 and S12 plays an important role in translational accuracy. Functionally, located at the back of the 30S subunit body where it stabilizes the conformation of the head with respect to the body. This is Small ribosomal subunit protein uS5 from Helicobacter pylori (strain J99 / ATCC 700824) (Campylobacter pylori J99).